The following is a 619-amino-acid chain: MADIPARTEMKVTTGPIRGSRKIHVEGPQGVRVAMREIALEPSSGEPPVRVYDCSGPYTDPNAHIDIMAGLPALRRDWILGRGDVEDYEGRAIKPEDNGLKGPDRSGGVTPFPNVVRRPLRAKAGQNVSQMHYARRGIITPEMEYVAIRENVGRAALKEKLLRDGEDFGAAIPDFVTPEFVRDEVARGRAIIPSNINHPESEPMAIGRNFLVKINANIGNSAVASDVAAEVDKMVWSIRWGADTVMDLSTGRNIHDTREWILRNSPVPIGTVPIYQALEKVGGIAEDLTWEIFRDTLIEQAEQGVDYFTIHAGVRLPFIPMTAKRVTGIVSRGGSIMAKWCLAHHRESFLYERFDEICEIMKAYDVAFSLGDGLRPGSIADANDEAQFSELKTLGELTQIAWQHDVQVMIEGPGHVPMHKIKANMDKQLEACGEAPFYTLGPLTTDIAPGYDHITSAIGAAMIGWFGTAMLCYVTPKEHLGLPDRDDVKVGVVTYKLAAHAADLAKGHPAAKLRDDALSRARFEFRWRDQFNLSLDPDTAEQYHDQTLPAEGAKTAHFCSMCGPKFCSMKITQEVRDFAATRNAPADQFIAAGDAEAGMRAMSDVFREKGGEIYLPAAE.

Positions 93–104 (IKPEDNGLKGPD) are enriched in basic and acidic residues. The tract at residues 93–114 (IKPEDNGLKGPDRSGGVTPFPN) is disordered. Substrate-binding positions include Asn217, Met246, Tyr275, His311, 331–333 (SRG), 372–375 (DGLR), and Glu411. Residue His415 coordinates Zn(2+). Tyr438 lines the substrate pocket. His479 is a Zn(2+) binding site. Positions 559, 562, and 567 each coordinate [4Fe-4S] cluster.

The protein belongs to the ThiC family. Homodimer. [4Fe-4S] cluster is required as a cofactor.

It carries out the reaction 5-amino-1-(5-phospho-beta-D-ribosyl)imidazole + S-adenosyl-L-methionine = 4-amino-2-methyl-5-(phosphooxymethyl)pyrimidine + CO + 5'-deoxyadenosine + formate + L-methionine + 3 H(+). It participates in cofactor biosynthesis; thiamine diphosphate biosynthesis. In terms of biological role, catalyzes the synthesis of the hydroxymethylpyrimidine phosphate (HMP-P) moiety of thiamine from aminoimidazole ribotide (AIR) in a radical S-adenosyl-L-methionine (SAM)-dependent reaction. This chain is Phosphomethylpyrimidine synthase, found in Rhizorhabdus wittichii (strain DSM 6014 / CCUG 31198 / JCM 15750 / NBRC 105917 / EY 4224 / RW1) (Sphingomonas wittichii).